The sequence spans 282 residues: HTH-type transcriptional activator RhaR (282 aa).

The HTH araC/xylS-type domain occupies 179 to 277 (DKLITALANS…GMTPSQWRHL (99 aa)). 2 DNA-binding regions (H-T-H motif) span residues 196–217 (DAFC…RAQT) and 244–267 (VSEI…TRET).

As to quaternary structure, binds DNA as a dimer.

The protein localises to the cytoplasm. Activates expression of the rhaSR operon in response to L-rhamnose. This Salmonella typhi protein is HTH-type transcriptional activator RhaR.